The primary structure comprises 333 residues: Fructose-1,6-bisphosphatase class 1 (333 aa).

Glutamate 92, aspartate 114, leucine 116, and aspartate 117 together coordinate Mg(2+). Substrate-binding positions include 117–120 (DGSS) and asparagine 209. Mg(2+) is bound at residue glutamate 279.

The protein belongs to the FBPase class 1 family. Homotetramer. Mg(2+) is required as a cofactor.

The protein localises to the cytoplasm. It catalyses the reaction beta-D-fructose 1,6-bisphosphate + H2O = beta-D-fructose 6-phosphate + phosphate. Its pathway is carbohydrate biosynthesis; gluconeogenesis. The sequence is that of Fructose-1,6-bisphosphatase class 1 from Alkalilimnicola ehrlichii (strain ATCC BAA-1101 / DSM 17681 / MLHE-1).